A 500-amino-acid polypeptide reads, in one-letter code: MKRLLPFLTELDAWVTELKPLKQMTLDSRQVDEGDLFVALKGHQVDGRRFIQKAIEQGAALVLAEADEGQDEIELDAKFAKYNLDRTACKVVLVPNLARILSEIAGAFYANPSEKLTLVGVTGTNGKTTSAQLLAQWHNLLGGKSAVMGTIGNGLYGKVQEAANTTGSAIEVQRNLADFVEMGADFCAMEVSSHGLAQYRAEALSYDLAVFTNLSRDHLDYHKTMEEYAQAKFRLFSELDTKAQVLNADDEVGREWLAKLPDAVAVSTDASFSSEHKFVKATDVSFSLQGVKIAFESSWGNGELNSRLIGAFNVNNLLTALAGLLVLGHDLPKLIETAPLLQGVAGRMECVVSQKNPQNRPLVLVDYAHTPDALEKALQAARLHTEGELYCIFGCGGDRDAGKRPMMAAIAEELADKVIATDDNPRTEDNAKIMADILNGFVQVEKVQVIHDREQAIKTAIEQANEKDVILIAGKGHEDYQIIGTTKHHFSDQETAAKYL.

Residues leucine 26, serine 28, and 43–45 each bind UDP-N-acetyl-alpha-D-muramoyl-L-alanyl-D-glutamate; that span reads HQV. ATP is bound at residue 123-129; it reads GTNGKTT. UDP-N-acetyl-alpha-D-muramoyl-L-alanyl-D-glutamate is bound by residues asparagine 164, 165–166, serine 192, glutamine 198, and arginine 200; that span reads TT. N6-carboxylysine is present on lysine 232. Residues arginine 399, 423–426, glycine 474, and glutamate 478 contribute to the meso-2,6-diaminopimelate site; that span reads DNPR. A Meso-diaminopimelate recognition motif motif is present at residues 423 to 426; that stretch reads DNPR.

This sequence belongs to the MurCDEF family. MurE subfamily. It depends on Mg(2+) as a cofactor. Post-translationally, carboxylation is probably crucial for Mg(2+) binding and, consequently, for the gamma-phosphate positioning of ATP.

It is found in the cytoplasm. The enzyme catalyses UDP-N-acetyl-alpha-D-muramoyl-L-alanyl-D-glutamate + meso-2,6-diaminopimelate + ATP = UDP-N-acetyl-alpha-D-muramoyl-L-alanyl-gamma-D-glutamyl-meso-2,6-diaminopimelate + ADP + phosphate + H(+). It participates in cell wall biogenesis; peptidoglycan biosynthesis. In terms of biological role, catalyzes the addition of meso-diaminopimelic acid to the nucleotide precursor UDP-N-acetylmuramoyl-L-alanyl-D-glutamate (UMAG) in the biosynthesis of bacterial cell-wall peptidoglycan. The sequence is that of UDP-N-acetylmuramoyl-L-alanyl-D-glutamate--2,6-diaminopimelate ligase from Actinobacillus pleuropneumoniae serotype 5b (strain L20).